The chain runs to 402 residues: LIM homeobox transcription factor 1-beta (402 aa).

LIM zinc-binding domains are found at residues 56-106 and 115-168; these read CEGC…CKQD and CSGC…CKGD. Disordered stretches follow at residues 176–229 and 326–346; these read LSSV…LTTQ and PYGS…PGDH. The homeobox DNA-binding region spans 219–278; that stretch reads PKRPRTILTTQQRRAFKASFEVSSKPCRKVRETLAAETGLSVRVVQVWFQNQRAKMKKLA. Residues 326 to 338 show a composition bias toward polar residues; that stretch reads PYGSSDPFQQGLT.

Interacts with DHX9. As to expression, expressed in most tissues. Highest levels in testis, thyroid, duodenum, skeletal muscle, and pancreatic islets.

It is found in the nucleus. Functionally, transcription factor involved in the regulation of podocyte-expressed genes. Essential for the specification of dorsal limb fate at both the zeugopodal and autopodal levels. The sequence is that of LIM homeobox transcription factor 1-beta (LMX1B) from Homo sapiens (Human).